Reading from the N-terminus, the 1040-residue chain is Multidrug resistance protein MdtB (1040 aa).

12 helical membrane-spanning segments follow: residues Leu25–Ala45, Leu347–Ala367, Ile369–Leu389, Leu396–Ile416, Ile440–Phe460, Phe472–Pro492, Trp537–Ile557, Leu863–Val883, Phe888–Ala908, Ile910–Ile930, Ile968–Val988, and Ile998–Ile1018.

This sequence belongs to the resistance-nodulation-cell division (RND) (TC 2.A.6) family. MdtB subfamily. As to quaternary structure, part of a tripartite efflux system composed of MdtA, MdtB and MdtC. MdtB forms a heteromultimer with MdtC.

It is found in the cell inner membrane. This is Multidrug resistance protein MdtB from Salmonella schwarzengrund (strain CVM19633).